The primary structure comprises 106 residues: Thioredoxin-2 (106 aa).

Residues 2-106 enclose the Thioredoxin domain; the sequence is VYQIKDKADL…RLEDVIKANI (105 aa). Catalysis depends on nucleophile residues cysteine 32 and cysteine 35. Residues cysteine 32 and cysteine 35 are joined by a disulfide bond.

The protein belongs to the thioredoxin family.

Functionally, participates in various redox reactions through the reversible oxidation of its active center dithiol to a disulfide and catalyzes dithiol-disulfide exchange reactions. As a reducing substrate of peroxiredoxin 1, thioredoxin 2 is preferred over thioredoxin 1. In Drosophila yakuba (Fruit fly), this protein is Thioredoxin-2.